Here is a 161-residue protein sequence, read N- to C-terminus: Ribonuclease P protein component 2 (161 aa).

Belongs to the eukaryotic/archaeal RNase P protein component 2 family. In terms of assembly, consists of a catalytic RNA component and at least 4-5 protein subunits.

The protein resides in the cytoplasm. The enzyme catalyses Endonucleolytic cleavage of RNA, removing 5'-extranucleotides from tRNA precursor.. Functionally, part of ribonuclease P, a protein complex that generates mature tRNA molecules by cleaving their 5'-ends. The chain is Ribonuclease P protein component 2 from Haloarcula marismortui (strain ATCC 43049 / DSM 3752 / JCM 8966 / VKM B-1809) (Halobacterium marismortui).